The chain runs to 904 residues: Nitrate reductase [NADH] 2 (904 aa).

Composition is skewed to polar residues over residues 1–10 and 35–50; these read MAASVENRQF and PSPNSTNFQKKPNSTI. A disordered region spans residues 1-65; the sequence is MAASVENRQF…SSEDDDDDDE (65 aa). A compositionally biased stretch (acidic residues) spans 56–65; the sequence is SSEDDDDDDE. Residue Cys183 coordinates Mo-molybdopterin. In terms of domain architecture, Cytochrome b5 heme-binding spans 531 to 606; the sequence is SKMYSMSEVR…LEDFRIGELI (76 aa). Heme-binding residues include His566 and His589. The FAD-binding FR-type domain maps to 647–759; it reads REKIPCKLID…KGPLGHIEYQ (113 aa). FAD-binding positions include 699-702, 716-720, Phe721, Phe728, 733-735, and Thr786; these read RAYT, VVKIY, and QMS.

The protein belongs to the nitrate reductase family. As to quaternary structure, homodimer. It depends on FAD as a cofactor. Heme serves as cofactor. The cofactor is Mo-molybdopterin.

It carries out the reaction nitrite + NAD(+) + H2O = nitrate + NADH + H(+). With respect to regulation, regulated by the nitrogen source and controlled by the circadian rhythm. In terms of biological role, nitrate reductase is a key enzyme involved in the first step of nitrate assimilation in plants, fungi and bacteria. This chain is Nitrate reductase [NADH] 2 (NIA2), found in Nicotiana tabacum (Common tobacco).